Consider the following 177-residue polypeptide: Disulfide bond formation protein B (177 aa).

At 1–14 (MLALLKQFSEKRFV) the chain is on the cytoplasmic side. Residues 15-31 (WFLLAFSSLALESTALY) traverse the membrane as a helical segment. Over 32–49 (FQYGMGLQPCVLCVYERL) the chain is Periplasmic. Residues cysteine 41 and cysteine 44 are joined by a disulfide bond. The chain crosses the membrane as a helical span at residues 50–65 (AMIGLFVAGIIALLQP). At 66–72 (LAFILRL) the chain is on the cytoplasmic side. A helical transmembrane segment spans residues 73 to 90 (IALALGLFSSIKGLLISF). Residues 91–145 (RHLDLQMNPAPWKQCEFIPNFPETLPFHQWFPFIFNPTGSCNESQWSLFGLTMVQ) are Periplasmic-facing. A disulfide bond links cysteine 105 and cysteine 131. A helical transmembrane segment spans residues 146 to 164 (WLVVIFSLYVVILTLLLIA). The Cytoplasmic segment spans residues 165 to 177 (QVIKTRKQRRLFN).

Belongs to the DsbB family.

Its subcellular location is the cell inner membrane. Its function is as follows. Required for disulfide bond formation in some periplasmic proteins. Acts by oxidizing the DsbA protein. In Haemophilus influenzae (strain 86-028NP), this protein is Disulfide bond formation protein B.